A 1709-amino-acid polypeptide reads, in one-letter code: Hybrid signal transduction histidine kinase L (1709 aa).

Disordered regions lie at residues 52–192 (SNNN…SPPH), 206–276 (FFSG…NSSD), 413–535 (TSNS…NNSC), and 554–615 (QQQQ…IFNN). Over residues 53 to 87 (NNNNNNNNNNNNNNNNNNNNNNNNNNNNNNNNNNN) the composition is skewed to low complexity. The span at 88 to 100 (NEEKSNNETEKTL) shows a compositional bias: basic and acidic residues. Low complexity predominate over residues 106–148 (TTTTTTTNNNNNNNNNNNNNNNNNNNNNNNNNNNNNNNNNNTN). Over residues 149–170 (SSNDIYMNSPSSTLSSPGNAGN) the composition is skewed to polar residues. Low complexity-rich tracts occupy residues 413 to 466 (TSNS…TPNS), 486 to 535 (NNSP…NNSC), and 554 to 576 (QQQQ…PTTS). A compositionally biased stretch (polar residues) spans 585–610 (LTINTSFKTSPMSSPKSFNKPSQSPQ). The 72-residue stretch at 700 to 771 (ATRKMVTCIE…ATLTDKKTWN (72 aa)) folds into the PAS domain. A PAC domain is found at 770–822 (WNGFIRTRHNNNTLIYFEASISPVLDQFQQILYYNCTKRDVTQKRIDEESKTL). The Histidine kinase domain maps to 837–1059 (MMSHDIRTPM…TFTCILKFKK (223 aa)). Position 840 is a phosphohistidine; by autocatalysis (H840). Disordered stretches follow at residues 1068-1112 (LLPA…HQQH) and 1137-1298 (QHQL…PTSP). Composition is skewed to low complexity over residues 1075–1112 (LQQQ…HQQH), 1137–1153 (QHQL…LQQQ), and 1176–1194 (NQHI…QQQQ). Over residues 1204-1221 (HNSHGHNHHGSHHNHNHQ) the composition is skewed to basic residues. Composition is skewed to polar residues over residues 1244–1257 (NEQQ…NSFS) and 1275–1298 (NISQ…PTSP). Response regulatory domains are found at residues 1312 to 1492 (KMLF…MMYL) and 1570 to 1692 (KVLV…KKYG). At D1366 the chain carries 4-aspartylphosphate. 2 stretches are compositionally biased toward low complexity: residues 1390–1412 (QHLQ…SELQ) and 1420–1440 (KNSS…SSGG). The disordered stretch occupies residues 1390–1440 (QHLQQQQEQEQQQQQEQQQSELQKQPDVENKNSSQNNDNNNNNNKSNSSGG). 4-aspartylphosphate is present on D1622.

In terms of processing, activation probably requires transfer of a phosphate group between a histidine in the kinase core (transmitter) domain and an aspartate of the receiver domain.

It catalyses the reaction ATP + protein L-histidine = ADP + protein N-phospho-L-histidine.. Functionally, acts as a receptor histidine kinase for a signal transduction pathway. This protein undergoes an ATP-dependent autophosphorylation at a conserved histidine residue in the kinase core, and a phosphoryl group is then transferred to a conserved aspartate residue in the receiver domain. The protein is Hybrid signal transduction histidine kinase L (dhkL) of Dictyostelium discoideum (Social amoeba).